Reading from the N-terminus, the 442-residue chain is Protein PHYTOCHROME KINASE SUBSTRATE 2 (442 aa).

Residues 110 to 130 form a disordered region; sequence IFVGPKQSSKNSSETPSLRSE. Low complexity predominate over residues 121 to 130; sequence SSETPSLRSE. Phosphoserine is present on residues Ser-239 and Ser-245. The tract at residues 394-442 is disordered; that stretch reads VSGDSYTSMNRTPSYVPRFPVEANPTSTETRRRISSSSVSHTQSPFLYT. Residues 397–406 show a composition bias toward polar residues; the sequence is DSYTSMNRTP. The span at 428 to 442 shows a compositional bias: low complexity; that stretch reads SSSSVSHTQSPFLYT.

The protein belongs to the PKS family. In terms of assembly, interacts with PKS1, RPT3, PHOT1 and PHOT2. Expressed in leaves, with the strongest expression on edges of the laminas. Not found in roots.

It localises to the cell membrane. Its function is as follows. Acts predominantly in the phot1 pathway. Involved in the leaf positioning and also in the phot2 pathway controlling the leaf flattening. Component of the network that modulates the very low-fluence response (VLFR) branch of phyA signaling. Regulates phytochrome-mediated photomorphogenesis and hypocotyl phototropism. May act by controlling auxin homeostasis. In Arabidopsis thaliana (Mouse-ear cress), this protein is Protein PHYTOCHROME KINASE SUBSTRATE 2 (PKS2).